Consider the following 466-residue polypeptide: UDP-N-acetylmuramoylalanine--D-glutamate ligase (466 aa).

ATP is bound at residue 122-128; that stretch reads GTNGKTT.

Belongs to the MurCDEF family.

The protein localises to the cytoplasm. The catalysed reaction is UDP-N-acetyl-alpha-D-muramoyl-L-alanine + D-glutamate + ATP = UDP-N-acetyl-alpha-D-muramoyl-L-alanyl-D-glutamate + ADP + phosphate + H(+). It functions in the pathway cell wall biogenesis; peptidoglycan biosynthesis. Cell wall formation. Catalyzes the addition of glutamate to the nucleotide precursor UDP-N-acetylmuramoyl-L-alanine (UMA). This is UDP-N-acetylmuramoylalanine--D-glutamate ligase from Aromatoleum aromaticum (strain DSM 19018 / LMG 30748 / EbN1) (Azoarcus sp. (strain EbN1)).